The following is a 123-amino-acid chain: Small ribosomal subunit protein uS12 (123 aa).

The residue at position 89 (aspartate 89) is a 3-methylthioaspartic acid.

It belongs to the universal ribosomal protein uS12 family. As to quaternary structure, part of the 30S ribosomal subunit. Contacts proteins S8 and S17. May interact with IF1 in the 30S initiation complex.

Functionally, with S4 and S5 plays an important role in translational accuracy. Its function is as follows. Interacts with and stabilizes bases of the 16S rRNA that are involved in tRNA selection in the A site and with the mRNA backbone. Located at the interface of the 30S and 50S subunits, it traverses the body of the 30S subunit contacting proteins on the other side and probably holding the rRNA structure together. The combined cluster of proteins S8, S12 and S17 appears to hold together the shoulder and platform of the 30S subunit. The chain is Small ribosomal subunit protein uS12 from Methylobacterium radiotolerans (strain ATCC 27329 / DSM 1819 / JCM 2831 / NBRC 15690 / NCIMB 10815 / 0-1).